Consider the following 665-residue polypeptide: ELMO family protein LMO1 (665 aa).

As to quaternary structure, forms an active heterodimer with DCK1.

Its subcellular location is the cytoplasm. It localises to the mitochondrion. Forms a transiant heterodimeric complex with DCK1, that acts as a guanine nucleotide exchange factor (GEF) for the small GTPase RHO5. DCK1, LMO1 and RHO5 relocate to mitochondria upon oxidative stress and trigger cell death. The DCK1/LMO1/RHO5 signaling module mediates mitochondrial turnover under nitrogen starvation conditions via mitophagy. The DCK1/LMO1/RHO5 signaling module also plays a role in cell wall integrity signaling. The protein is ELMO family protein LMO1 of Saccharomyces cerevisiae (strain ATCC 204508 / S288c) (Baker's yeast).